The primary structure comprises 166 residues: Plastocyanin, chloroplastic (166 aa).

The N-terminal 67 residues, 1 to 67 (MASLTSAAVT…GAVLASNALA (67 aa)), are a transit peptide targeting the chloroplast. The 99-residue stretch at 68 to 166 (VEVLLGGSDG…AGMAGKITVN (99 aa)) folds into the Plastocyanin-like domain. The Cu cation site is built by H104, C151, H154, and M159.

It belongs to the plastocyanin family. It depends on Cu(2+) as a cofactor.

The protein resides in the plastid. The protein localises to the chloroplast thylakoid membrane. Functionally, participates in electron transfer between P700 and the cytochrome b6-f complex in photosystem I. The sequence is that of Plastocyanin, chloroplastic (PETE) from Fritillaria agrestis (Stinkbells).